Reading from the N-terminus, the 163-residue chain is Arginine repressor (163 aa).

This sequence belongs to the ArgR family.

It localises to the cytoplasm. It participates in amino-acid biosynthesis; L-arginine biosynthesis [regulation]. In terms of biological role, regulates arginine biosynthesis genes. The protein is Arginine repressor of Corynebacterium diphtheriae (strain ATCC 700971 / NCTC 13129 / Biotype gravis).